We begin with the raw amino-acid sequence, 376 residues long: Putative F-box protein At1g30930 (376 aa).

Residues 1 to 44 (MKNSIPIDLIIEIVSRSTAKSVARCHCVSKQWRAIFRRKYFIEL) enclose the F-box domain.

This Arabidopsis thaliana (Mouse-ear cress) protein is Putative F-box protein At1g30930.